The primary structure comprises 1940 residues: Myosin-3 (1940 aa).

The 50-residue stretch at 33 to 82 folds into the Myosin N-terminal SH3-like domain; the sequence is DAKTYCFVVDSKEEYAKGKIKSSQDGKVTVETEDNRTLVVKPEDVYAMNP. One can recognise a Myosin motor domain in the interval 86–779; sequence DKIEDMAMLT…LLGTLEEMRD (694 aa). An N6,N6,N6-trimethyllysine modification is found at lysine 130. 179 to 186 is an ATP binding site; sequence GESGAGKT. Actin-binding regions lie at residues 656 to 678 and 758 to 772; these read LNKL…IPNE and KFGH…GLLG. Residues 782–811 form the IQ domain; sequence LAKLITRTQAVCRGFLMRVEFQKMMQRRES. Positions 840–1933 form a coiled coil; the sequence is LLKSAETEKE…KTRDFTSSRM (1094 aa). A disordered region spans residues 1260-1289; that stretch reads ARGKNEETQRSLSELTTQKSRLQTEAGELS. A compositionally biased stretch (polar residues) spans 1269 to 1282; sequence RSLSELTTQKSRLQ.

Belongs to the TRAFAC class myosin-kinesin ATPase superfamily. Myosin family. In terms of assembly, muscle myosin is a hexameric protein that consists of 2 heavy chain subunits (MHC), 2 alkali light chain subunits (MLC) and 2 regulatory light chain subunits (MLC-2).

The protein resides in the cytoplasm. It is found in the myofibril. Functionally, muscle contraction. This chain is Myosin-3 (Myh3), found in Rattus norvegicus (Rat).